Consider the following 1369-residue polypeptide: MITRELQLLAYTAEPSALETAAIAALRSIPGLQNVIIQTQDAYLVTFFTSPRPLREHQLKIETLLFIKAALRTFDEQQYLPIPLSALSSSFTFVYGPDINRLPTSQSNELTAILQTRDAREKVFNVERIQHCRLLFFSGPGSEQLNHTHYALLREILCGDLTLYQPFRNELFNSSLDFYATIYPPRFLKDKVRHYVHGDINLNITGAASNYNWASPHTAVTDSEIFRIPYTHVVRFIDRWEIRVRVPDVGFHGSRGVRFRQHGGAAYMCSTLNSTTGATGCLQKGMITSFISQPTLGQLGLITEPMCGWGQQELSATAIQMLTKYANTVEAFAKTLNYAGVPLVQGFVTLSPTLREKRAMAFTGSLSITGLPPYILKPPTAETLDAAMERNRQLLLVEVGYPDYGKGKLHNPVNIMNSESGRHAHILHQALRQLMIITPFGKVIHICCDWQYNEKVTMFKIAKACGDLGLSMSARSLPAHTLRLLKKWNFRNLNYNHRIIKNSWLKVDSAAALVVIADNEYQDVSKKMDIALSGWGCPFHILGNLTPNSNTIVISDKNQYGEIVDIQYKMHMPKQPSEGTEDTPLAPDMSNIQLFKNLDVTEDLLLQVLRHPTVGCKAHIVHHVDRCGNGHIAQQPGVGPFDIPLCDFSVTVHNLVDGDIREGMESVPRVWAADWRVARRLIETQYSTPGLDITDATLANNLGLTYHIPSEHQVTVESKKYGNCIGIGEKTTFTQRDPLLGTILAIVESCTNCILGPVENYEEFLIGLSISVPEGIHYRHEVNSIMAMAKDFCSSMNFGFQVNSAENGNCLLRSVVATANAPCVVPGPSLKPYFKKPGSAILRVNLHTEHFLSGGICCMASGIGASETFTPTPSQLRNLLQFMLIVKAENLALSGHDVSDGGLICAVCEMMFAGGLSARLIIHDEDEEPVFPLFSETPGFVLEVNAIDVAAIIARANLYNVECIQIGEVVESDTFTVFHQNTQLLSVPVSRLKHNWTLFSKSVDLLYVKEDQVLPEETSYGNYEVHLTVDPYSIISQSTTRPNVLVHLLPGCGYPDALLAALTNSGFSPDTVVYPGCKYRHNRREDAAPGSPTADDFIAGIVLYGSSNIDSDVGDSTIRQWLNVNRQVINDVRRNLKAKGSFTLAIGQLACRILFATKAIGFDAGSQQTPFLLPNASRRYESRWLNFKIPEDTKAVAFRDLRGCVLPCWVQGTHLGFSHNNITFFGDLETRQQVAATFNGPLVQSGPAREYPLNPTEAEHPYAGLCSEDGRHLALLFDPCLAFNTWQWQHNQTGPGQGELPVSPWKLMFYRLYNWSKFHQHYRSLLRTNLRHTFNFETQQLDFPHADRRGAVPHDNPQYIPMDAMDPSQ.

The interval 1347–1369 (DRRGAVPHDNPQYIPMDAMDPSQ) is disordered.

It localises to the virion tegument. The sequence is that of Probable tegument protein antigen 3 (3) from Connochaetes taurinus (Blue wildebeest).